Reading from the N-terminus, the 410-residue chain is Histone-lysine N-methyltransferase SUV39H2 (410 aa).

Residues 47 to 105 (YEVEYLCDYKVVKDMEYYLVKWKGWPDSTNTWEPLQNLKCPLLLQQFFNDKHNYLSQVK) form the Chromo domain. The Pre-SET domain maps to 189–247 (FGCSCTDCFFEKCCPAEAGVLLAYNKNQQIKIPPGTPIYECNSRCQCGPDCPNRIVQKG). Residues cysteine 191, cysteine 193, cysteine 196, cysteine 201, cysteine 202, cysteine 229, cysteine 233, cysteine 235, and cysteine 239 each coordinate Zn(2+). Residues 250-373 (YSLCIFRTSN…AGEELTFDYQ (124 aa)) enclose the SET domain. S-adenosyl-L-methionine contacts are provided by residues 261-263 (CGW), tyrosine 304, and 330-331 (NH). Position 333 (cysteine 333) interacts with Zn(2+). 3 positions are modified to phosphoserine: serine 381, serine 384, and serine 388. The Post-SET domain occupies 394 to 410 (ARTVCKCGAVTCRGYLN). 3 residues coordinate Zn(2+): cysteine 398, cysteine 400, and cysteine 405.

Belongs to the class V-like SAM-binding methyltransferase superfamily. Histone-lysine methyltransferase family. Suvar3-9 subfamily. As to quaternary structure, interacts with SMAD5. The large PER complex involved in the histone methylation is composed of at least PER2, CBX3, TRIM28, SUV39H1 and/or SUV39H2; CBX3 mediates the formation of the complex. In terms of processing, ubiquitinated by the DCX(DCAF13) E3 ubiquitin ligase complex, leading to its degradation.

The protein resides in the nucleus. It localises to the chromosome. Its subcellular location is the centromere. The enzyme catalyses L-lysyl(9)-[histone H3] + 3 S-adenosyl-L-methionine = N(6),N(6),N(6)-trimethyl-L-lysyl(9)-[histone H3] + 3 S-adenosyl-L-homocysteine + 3 H(+). Functionally, histone methyltransferase that specifically trimethylates 'Lys-9' of histone H3 using monomethylated H3 'Lys-9' as substrate. H3 'Lys-9' trimethylation represents a specific tag for epigenetic transcriptional repression by recruiting HP1 (CBX1, CBX3 and/or CBX5) proteins to methylated histones. Mainly functions in heterochromatin regions, thereby playing a central role in the establishment of constitutive heterochromatin at pericentric and telomere regions. H3 'Lys-9' trimethylation is also required to direct DNA methylation at pericentric repeats. SUV39H1 is targeted to histone H3 via its interaction with RB1 and is involved in many processes, such as cell cycle regulation, transcriptional repression and regulation of telomere length. May participate in regulation of higher-order chromatin organization during spermatogenesis. Recruited by the large PER complex to the E-box elements of the circadian target genes such as PER2 itself or PER1, contributes to the conversion of local chromatin to a heterochromatin-like repressive state through H3 'Lys-9' trimethylation. The sequence is that of Histone-lysine N-methyltransferase SUV39H2 (SUV39H2) from Bos taurus (Bovine).